The primary structure comprises 288 residues: 4-diphosphocytidyl-2-C-methyl-D-erythritol kinase (288 aa).

The active site involves Lys8. An ATP-binding site is contributed by 90–100; sequence PVGAGLAGGSS. The active site involves Asp132.

It belongs to the GHMP kinase family. IspE subfamily.

It carries out the reaction 4-CDP-2-C-methyl-D-erythritol + ATP = 4-CDP-2-C-methyl-D-erythritol 2-phosphate + ADP + H(+). The protein operates within isoprenoid biosynthesis; isopentenyl diphosphate biosynthesis via DXP pathway; isopentenyl diphosphate from 1-deoxy-D-xylulose 5-phosphate: step 3/6. Functionally, catalyzes the phosphorylation of the position 2 hydroxy group of 4-diphosphocytidyl-2C-methyl-D-erythritol. The sequence is that of 4-diphosphocytidyl-2-C-methyl-D-erythritol kinase from Chlamydia trachomatis serovar L2b (strain UCH-1/proctitis).